Consider the following 337-residue polypeptide: Dihydroorotate dehydrogenase (quinone) (337 aa).

FMN contacts are provided by residues alanine 58 to lysine 62 and threonine 82. Lysine 62 is a binding site for substrate. Residue asparagine 107–phenylalanine 111 participates in substrate binding. FMN contacts are provided by asparagine 137 and asparagine 170. A substrate-binding site is contributed by asparagine 170. Catalysis depends on serine 173, which acts as the Nucleophile. Position 175 (asparagine 175) interacts with substrate. Lysine 215 and threonine 243 together coordinate FMN. Asparagine 244–threonine 245 is a binding site for substrate. FMN contacts are provided by residues glycine 266, glycine 294, and tyrosine 315–serine 316.

Belongs to the dihydroorotate dehydrogenase family. Type 2 subfamily. As to quaternary structure, monomer. FMN is required as a cofactor.

The protein localises to the cell membrane. The enzyme catalyses (S)-dihydroorotate + a quinone = orotate + a quinol. Its pathway is pyrimidine metabolism; UMP biosynthesis via de novo pathway; orotate from (S)-dihydroorotate (quinone route): step 1/1. Functionally, catalyzes the conversion of dihydroorotate to orotate with quinone as electron acceptor. The protein is Dihydroorotate dehydrogenase (quinone) of Dichelobacter nodosus (strain VCS1703A).